The primary structure comprises 64 residues: Putative antitoxin MJ0975 (64 aa).

It belongs to the UPF0165 family.

Functionally, possibly the antitoxin component of a type II toxin-antitoxin (TA) system. Its cognate toxin is VapC2 (Potential). This is Putative antitoxin MJ0975 (vapB2) from Methanocaldococcus jannaschii (strain ATCC 43067 / DSM 2661 / JAL-1 / JCM 10045 / NBRC 100440) (Methanococcus jannaschii).